Here is a 302-residue protein sequence, read N- to C-terminus: Nucleotide-binding protein Bcep18194_A6125 (302 aa).

ATP is bound at residue 8–15; that stretch reads GISGSGKS. 57 to 60 serves as a coordination point for GTP; that stretch reads DARS.

It belongs to the RapZ-like family.

Displays ATPase and GTPase activities. In Burkholderia lata (strain ATCC 17760 / DSM 23089 / LMG 22485 / NCIMB 9086 / R18194 / 383), this protein is Nucleotide-binding protein Bcep18194_A6125.